The chain runs to 1152 residues: Receptor-type guanylate cyclase gcy-8 (1152 aa).

Positions 1 to 21 are cleaved as a signal peptide; sequence MRTKKAFLLLTFNVLIYLAAC. The Extracellular segment spans residues 22 to 506; it reads QETERILANN…GYRNERCDYT (485 aa). N-linked (GlcNAc...) asparagine glycosylation is found at Asn31, Asn55, Asn385, and Asn465. Residues 507-527 form a helical membrane-spanning segment; that stretch reads LIIIGAALILLFIVAAVSAFF. Residues 528–1152 are Cytoplasmic-facing; that stretch reads AQKILEKRAL…NLKNPTGLQR (625 aa). Positions 567–857 constitute a Protein kinase domain; the sequence is RTKMSNMNYG…RIKLNVETYL (291 aa). Residues 573-581 and Lys593 contribute to the ATP site; that span reads MNYGSRNHA. The stretch at 861-899 forms a coiled coil; it reads GSLVDQMTRMMEQYANNLEKLVAERTGMLEEANQRADRL. One can recognise a Guanylate cyclase domain in the interval 927-1057; that stretch reads TVLFSDIVGF…DTVNMASRME (131 aa). The Mg(2+) site is built by Asp932, Ile933, and Asp976.

It belongs to the adenylyl cyclase class-4/guanylyl cyclase family. As to expression, expressed bilaterally in AFD sensory neurons.

It is found in the cell membrane. The protein resides in the cell projection. The protein localises to the cilium. It catalyses the reaction GTP = 3',5'-cyclic GMP + diphosphate. With respect to regulation, inhibited by chloride with an IC(50) of 60 mM. Functionally, guanylate cyclase involved in the production of the second messenger cGMP. Regulates thermotaxis responses in AFD sensory neurons. May regulate AFD neuronal activity such as calcium responses to temperature gradients. Maintains the microvilli receptive ending morphology of the AFD thermosensory neurons by regulating cGMP levels downstream of kcc-3. cGMP levels antagonize the actin cytoskeleton regulator wsp-1. This chain is Receptor-type guanylate cyclase gcy-8, found in Caenorhabditis elegans.